A 311-amino-acid polypeptide reads, in one-letter code: MQAPPPEHCPGVESEEAGKGSACSGCPNQGLCSDPNKKLEDPGKALVVESMKDVKHKLLILSGKGGVGKSTVTSLLTRYLARSNPDSNFGVLDIDICGPSQPRLMGALGESVHQSGYGWSPVGIEDNVCLMSIGFLLGSVDDAIIWRGPKKNGMIRQFLSEVDWGNLDLLLLDTPPGTSDEHLSVVSYLKDDANPESLRAVMVTTPQEVSLLDVRKEINFCKKQNIPIVGVIENMSSFRCGHCGNSSEIFPAKTGGAAAMCAEMGIPLLGSLPLDQQISKACDSGEDLTEFKNVTTEALEGICSKIMASFS.

The segment at 1-21 (MQAPPPEHCPGVESEEAGKGS) is disordered. Positions 9, 23, 26, and 32 each coordinate [4Fe-4S] cluster. 63–70 (GKGGVGKS) lines the ATP pocket. Residues cysteine 240 and cysteine 243 each contribute to the [4Fe-4S] cluster site.

It belongs to the Mrp/NBP35 ATP-binding proteins family. NUBP1/NBP35 subfamily. In terms of assembly, heterotetramer of 2 Nubp1 and 2 Nubp2 chains. It depends on [4Fe-4S] cluster as a cofactor.

Its subcellular location is the cytoplasm. In terms of biological role, component of the cytosolic iron-sulfur (Fe/S) protein assembly (CIA) machinery. Required for maturation of extramitochondrial Fe-S proteins. The Nubp1-Nubp2 heterotetramer forms a Fe-S scaffold complex, mediating the de novo assembly of an Fe-S cluster and its transfer to target apoproteins. The chain is Cytosolic Fe-S cluster assembly factor Nubp1 homolog from Drosophila melanogaster (Fruit fly).